The primary structure comprises 534 residues: MPEDKVEAIEHVESSRHDATVNEKAIADFLNAEKEMTTWQAVRAHRRLLLFAAYRVTHLAILPFVCASNYGYDTVSNGSSIAMPAFIMSFGAMNHATGSMYLPSIWTSLWTSMTNLGQALGSLIAGFLAERIGRRWTAVSLAILSIVGTFILVFSSTRGMLLVGKTMNGAVVGGLMAIGTTYAADVAPIKLRGALLQAIVFFGVAMQGVSLGIVRAFILDMRPLAWKIVFGIQWAFATLVLIAAFLVPESPVFYVAHGKHDKAQSALRRLHGSSDQYLHIRYGAIVHALDEERKQQSESVSWAELFKGCNLKRTITIGFIMFSTSAIGVPFLTQNIYFLITVGLNVTSVFDIGIGGFFLGCLFVMLGWLSNEGIGRRRLWLWGLIGNFLCMVTIGALGFSTTKASQLAIAVIMNVLISYGVYATVGVAWTICPEISSHRLRQYSQSVAFIVGAVGGWLFNFITPYMYNVDSGNLGAKTGFVYAGLTVVVAVISWFLVPETAGLSVEDIDRAYEMGTAPRHFKSAKATVSAESGH.

12 consecutive transmembrane segments (helical) span residues 48–68 (LLLF…VCAS), 109–129 (LWTS…GFLA), 136–156 (WTAV…VFSS), 169–189 (GAVV…VAPI), 194–214 (ALLQ…LGIV), 228–248 (IVFG…FLVP), 326–346 (AIGV…GLNV), 349–369 (VFDI…LGWL), 379–399 (LWLW…ALGF), 407–427 (LAIA…TVGV), 447–467 (VAFI…PYMY), and 478–498 (TGFV…FLVP).

It belongs to the major facilitator superfamily. Sugar transporter (TC 2.A.1.1) family.

Its subcellular location is the cytoplasmic vesicle membrane. MFS transporter; part of the gene cluster that mediates the biosynthesis of the antitumor cytotoxic peptidyl alkaloids fumiquinazolines that confer a dual-usage capability to defend against phagocytes in the environment and animal hosts. Probably involved in fumiquinazolines metabolism and transport. The protein is MFS transporter fmqE of Aspergillus fumigatus (strain ATCC MYA-4609 / CBS 101355 / FGSC A1100 / Af293) (Neosartorya fumigata).